Consider the following 185-residue polypeptide: MSNTASLKKEYQDRIVPALTKEFGYKSVMQVPVLKKIVINQGLGMATADKKIIDIAISELSTITGQKAVATVSKKDISNFKLRKKMPIGVMVTLRREQMYEFLERLVRVALPRIRDFKGIESKLDGRGNYTLGIQEQIIFPEINIDNITKILGMNITFVTSAKTDEEGYALLREFGLPFKNGKKD.

Belongs to the universal ribosomal protein uL5 family. In terms of assembly, part of the 50S ribosomal subunit; part of the 5S rRNA/L5/L18/L25 subcomplex. Contacts the 5S rRNA and the P site tRNA. Forms a bridge to the 30S subunit in the 70S ribosome.

Functionally, this is one of the proteins that bind and probably mediate the attachment of the 5S RNA into the large ribosomal subunit, where it forms part of the central protuberance. In the 70S ribosome it contacts protein S13 of the 30S subunit (bridge B1b), connecting the 2 subunits; this bridge is implicated in subunit movement. Contacts the P site tRNA; the 5S rRNA and some of its associated proteins might help stabilize positioning of ribosome-bound tRNAs. This Parabacteroides distasonis (strain ATCC 8503 / DSM 20701 / CIP 104284 / JCM 5825 / NCTC 11152) protein is Large ribosomal subunit protein uL5.